Here is a 105-residue protein sequence, read N- to C-terminus: MNIYDVLIWMALGMTALLIQYGIWRYLKGKGKDTIPLQICGFLANFFFIFALAWGYSSFSEREYQAIGMGFIFFGGTALIPAIITYRLANHPAKKIRESSDSISA.

Transmembrane regions (helical) follow at residues 3–23, 35–55, and 66–86; these read IYDV…QYGI, IPLQ…LAWG, and AIGM…IITY.

The protein belongs to the PceB family.

It localises to the cell membrane. In terms of biological role, may act as a membrane anchor for the tetrachloroethene reductive dehalogenase PceA. This is Probable tetrachloroethene reductive dehalogenase membrane anchor protein from Desulfitobacterium hafniense (Desulfitobacterium frappieri).